We begin with the raw amino-acid sequence, 125 residues long: Small ribosomal subunit protein uS13 (125 aa).

Residues 91-125 are disordered; the sequence is HRRSLPVRGQNTQTNARTRKGKRKTVAGKKKAARK. Residues 107–125 show a composition bias toward basic residues; that stretch reads RTRKGKRKTVAGKKKAARK.

Belongs to the universal ribosomal protein uS13 family. As to quaternary structure, part of the 30S ribosomal subunit. Forms a loose heterodimer with protein S19. Forms two bridges to the 50S subunit in the 70S ribosome.

Its function is as follows. Located at the top of the head of the 30S subunit, it contacts several helices of the 16S rRNA. In the 70S ribosome it contacts the 23S rRNA (bridge B1a) and protein L5 of the 50S subunit (bridge B1b), connecting the 2 subunits; these bridges are implicated in subunit movement. Contacts the tRNAs in the A and P-sites. This Chlorobium phaeovibrioides (strain DSM 265 / 1930) (Prosthecochloris vibrioformis (strain DSM 265)) protein is Small ribosomal subunit protein uS13.